The chain runs to 169 residues: MPRSQRNDNFIDKTFTIIADILLRIIPMAPGEKEAFTYYRDGMSAQSEGEYAEALQNYYEAMRLETDPYDRSYILYNIGLVHTSNGEHTKALEYYFQALERNPSLPQALNNTALICHYRGEQAIRQGDPETAEAWFDQAAEYWEQAIALAPGNYIEAQNWLKITGRFGE.

TPR repeat units follow at residues 35–68, 72–105, and 120–153; these read AFTY…ETDP, SYIL…NPSL, and GEQA…APGN.

This sequence belongs to the Ycf3 family.

It is found in the plastid. The protein localises to the chloroplast thylakoid membrane. Essential for the assembly of the photosystem I (PSI) complex. May act as a chaperone-like factor to guide the assembly of the PSI subunits. In Pinus koraiensis (Korean pine), this protein is Photosystem I assembly protein Ycf3.